Consider the following 454-residue polypeptide: uncharacterized protein (454 aa).

The HNH domain occupies 364 to 405 (CSRPGCDAPAYHSEVHHVTPWTTTHRTDINDLTLACGPDNRL).

Belongs to the Rv1128c/1148c/1588c/1702c/1945/3466 family.

This is an uncharacterized protein from Mycobacterium tuberculosis (strain ATCC 25618 / H37Rv).